We begin with the raw amino-acid sequence, 212 residues long: ATP-dependent dethiobiotin synthetase BioD (212 aa).

An ATP-binding site is contributed by 12 to 17 (DCGKTF). T16 contacts Mg(2+). Residue K33 is part of the active site. Substrate is bound at residue S37. Residues D50, 110–113 (EGAG), and 170–171 (NC) each bind ATP. 2 residues coordinate Mg(2+): D50 and E110.

This sequence belongs to the dethiobiotin synthetase family. Homodimer. Mg(2+) serves as cofactor.

Its subcellular location is the cytoplasm. It catalyses the reaction (7R,8S)-7,8-diammoniononanoate + CO2 + ATP = (4R,5S)-dethiobiotin + ADP + phosphate + 3 H(+). The protein operates within cofactor biosynthesis; biotin biosynthesis; biotin from 7,8-diaminononanoate: step 1/2. Catalyzes a mechanistically unusual reaction, the ATP-dependent insertion of CO2 between the N7 and N8 nitrogen atoms of 7,8-diaminopelargonic acid (DAPA, also called 7,8-diammoniononanoate) to form a ureido ring. The polypeptide is ATP-dependent dethiobiotin synthetase BioD (Legionella pneumophila (strain Paris)).